The following is a 130-amino-acid chain: Small ribosomal subunit protein uS8 (130 aa).

Belongs to the universal ribosomal protein uS8 family. Part of the 30S ribosomal subunit. Contacts proteins S5 and S12.

Functionally, one of the primary rRNA binding proteins, it binds directly to 16S rRNA central domain where it helps coordinate assembly of the platform of the 30S subunit. The polypeptide is Small ribosomal subunit protein uS8 (Shewanella loihica (strain ATCC BAA-1088 / PV-4)).